Here is a 416-residue protein sequence, read N- to C-terminus: MFQKPKGTRDFLPEEMKKRKTIEKKLRKVFDSYNFSEINTPTFESFELLSKKTGDEIRTQLFVFRDHGDREMGLRPELTSSVARFYINEFKNTPKPVKLYYFTNCFRYENPQAGRYREFWQMGSELIGSKKPIADAEVVNMAIEGLKEINMDFEIHIGHLGVLKGVFEKYNLSDDEGNEIRRLIDKEDMDGLKSVLSRLESEKNIEISKKVFEVLDLKGGKEVIPILKEKLADFESSVAALENLDSILEFVPHDYVINFGIARGLDYYTGMVFEVYGKKEGAKQVCGGGRYDNLIELFEGEPSPAVGFAYGFDRIMLNIDDFEVENESIFVVPVKSSEMLLKECLKIAKTLRDSGKSVEVDLMGRKLNKALNYANTKNIKKVLIVGENDIRDGKVSLKNMETGEQSLIELKDILNI.

This sequence belongs to the class-II aminoacyl-tRNA synthetase family.

The protein localises to the cytoplasm. The catalysed reaction is tRNA(His) + L-histidine + ATP = L-histidyl-tRNA(His) + AMP + diphosphate + H(+). In Methanococcus maripaludis (strain DSM 14266 / JCM 13030 / NBRC 101832 / S2 / LL), this protein is Histidine--tRNA ligase.